Reading from the N-terminus, the 713-residue chain is Nuclear poly(A) polymerase 1 (713 aa).

ATP contacts are provided by residues F91–S93, A103–D106, D159, Y229, and G238–I239. 3 residues coordinate Mg(2+): D104, D106, and D159. Residues F480–K555 form a disordered region. A compositionally biased stretch (low complexity) spans S507–S526.

It belongs to the poly(A) polymerase family. As to quaternary structure, monomer. Forms a complex with cleavage and polyadenylation specificity factor (CPSF) subunit PAPS4. It depends on Mg(2+) as a cofactor. Requires Mn(2+) as cofactor. Expressed in stems, cotyledons, hypocotyls, radicle, leaves, and, to a lower extent, in roots (including primary and secondary roots as well as root tips) and flowers. In radicle, roots and leaves, mainly present in vascular tissues.

The protein localises to the nucleus. The catalysed reaction is RNA(n) + ATP = RNA(n)-3'-adenine ribonucleotide + diphosphate. Its function is as follows. Essential protein. Polymerase that creates the 3'-poly(A) tail of mRNA's. Also required for the endoribonucleolytic cleavage reaction at some polyadenylation sites. May acquire specificity through interaction with a cleavage and polyadenylation specificity factor (CPSF) at its C-terminus. This is Nuclear poly(A) polymerase 1 from Arabidopsis thaliana (Mouse-ear cress).